We begin with the raw amino-acid sequence, 95 residues long: uncharacterized protein (95 aa).

This is an uncharacterized protein from Sulfolobus islandicus rod-shaped virus 1 (SIRV-1).